Reading from the N-terminus, the 79-residue chain is Acyl carrier protein (79 aa).

In terms of domain architecture, Carrier spans 2–77 (SEIGERVKKI…DAVKFLEKNA (76 aa)). Serine 37 carries the O-(pantetheine 4'-phosphoryl)serine modification.

This sequence belongs to the acyl carrier protein (ACP) family. In terms of processing, 4'-phosphopantetheine is transferred from CoA to a specific serine of apo-ACP by AcpS. This modification is essential for activity because fatty acids are bound in thioester linkage to the sulfhydryl of the prosthetic group.

It localises to the cytoplasm. It functions in the pathway lipid metabolism; fatty acid biosynthesis. Its function is as follows. Carrier of the growing fatty acid chain in fatty acid biosynthesis. This is Acyl carrier protein from Rhodopseudomonas palustris (strain BisA53).